The sequence spans 119 residues: MSNDKKNAFPIKLTHSAADQVKKLISSQDYAEKLDLKLRVYILGGGCGGFQYKFILDDQVSNDDCVIESNGAIVVVDPMSLQYLFGGIIDYYEGLEGSKFLVVNPNAKGVCSCGSSFNI.

Iron-sulfur cluster-binding residues include C47, C111, and C113.

This sequence belongs to the HesB/IscA family. Homodimer. Iron-sulfur cluster is required as a cofactor.

In terms of biological role, required for insertion of 4Fe-4S clusters for at least IspG. The polypeptide is Iron-sulfur cluster insertion protein ErpA (Blochmanniella floridana).